Consider the following 82-residue polypeptide: Progonadoliberin-3 (82 aa).

The signal sequence occupies residues 1–23 (MDLSNRTVVQVVVLALVAQVTLS). Position 24 is a pyrrolidone carboxylic acid (Gln24). Gly33 bears the Glycine amide mark.

The protein belongs to the GnRH family. Brain.

It localises to the secreted. In terms of biological role, stimulates the secretion of gonadotropins. In Oncorhynchus nerka (Sockeye salmon), this protein is Progonadoliberin-3 (gnrh3).